A 396-amino-acid polypeptide reads, in one-letter code: Aspartate aminotransferase (396 aa).

3 residues coordinate L-aspartate: G34, W130, and N183. K246 carries the post-translational modification N6-(pyridoxal phosphate)lysine. Position 374 (R374) interacts with L-aspartate.

The protein belongs to the class-I pyridoxal-phosphate-dependent aminotransferase family. As to quaternary structure, homodimer. Requires pyridoxal 5'-phosphate as cofactor.

Its subcellular location is the cytoplasm. The enzyme catalyses L-aspartate + 2-oxoglutarate = oxaloacetate + L-glutamate. This is Aspartate aminotransferase (aspC) from Haemophilus influenzae (strain ATCC 51907 / DSM 11121 / KW20 / Rd).